A 73-amino-acid chain; its full sequence is Guanine nucleotide-binding protein G(I)/G(S)/G(O) subunit gamma-11 (73 aa).

Residues 54-73 (VKGIPEDKNPFKEKGSCIIS) form a disordered region. Cysteine 70 is modified (cysteine methyl ester). Cysteine 70 carries the S-farnesyl cysteine lipid modification. A propeptide spans 71-73 (IIS) (removed in mature form).

Belongs to the G protein gamma family. G proteins are composed of 3 units, alpha, beta and gamma. Interacts with beta-1 and beta-3, but not with beta-2.

It localises to the cell membrane. Guanine nucleotide-binding proteins (G proteins) are involved as a modulator or transducer in various transmembrane signaling systems. The beta and gamma chains are required for the GTPase activity, for replacement of GDP by GTP, and for G protein-effector interaction. This chain is Guanine nucleotide-binding protein G(I)/G(S)/G(O) subunit gamma-11 (GNG11), found in Bos taurus (Bovine).